The following is a 312-amino-acid chain: DNA-directed RNA polymerase subunit alpha (312 aa).

The interval Met1–Ala225 is alpha N-terminal domain (alpha-NTD). Residues Lys243–Asp312 form an alpha C-terminal domain (alpha-CTD) region.

It belongs to the RNA polymerase alpha chain family. In terms of assembly, homodimer. The RNAP catalytic core consists of 2 alpha, 1 beta, 1 beta' and 1 omega subunit. When a sigma factor is associated with the core the holoenzyme is formed, which can initiate transcription.

It carries out the reaction RNA(n) + a ribonucleoside 5'-triphosphate = RNA(n+1) + diphosphate. Its function is as follows. DNA-dependent RNA polymerase catalyzes the transcription of DNA into RNA using the four ribonucleoside triphosphates as substrates. The sequence is that of DNA-directed RNA polymerase subunit alpha from Lactobacillus helveticus (strain DPC 4571).